Here is a 367-residue protein sequence, read N- to C-terminus: Aspartate beta-hydroxylase domain-containing protein 1 (367 aa).

The disordered stretch occupies residues methionine 1 to asparagine 27. The Cytoplasmic segment spans residues methionine 1–proline 49. Residues leucine 50–cysteine 72 traverse the membrane as a helical segment. At tyrosine 73–proline 367 the chain is on the lumenal side. The tract at residues arginine 88–leucine 122 is disordered. Serine 106 is subject to Phosphoserine.

This sequence belongs to the aspartyl/asparaginyl beta-hydroxylase family.

It is found in the membrane. The polypeptide is Aspartate beta-hydroxylase domain-containing protein 1 (ASPHD1) (Bos taurus (Bovine)).